We begin with the raw amino-acid sequence, 260 residues long: 14-3-3-like protein GF14-F (260 aa).

Residues Asn241–His260 are disordered. The segment covering Asp247–His260 has biased composition (basic and acidic residues).

This sequence belongs to the 14-3-3 family. As to quaternary structure, may form a complex with the transcriptional activator VP1 and the bZIP transcription factor EMBP1. As to expression, expressed in seedlings, roots and panicles and at lower levels in flag leaves and internodes.

The protein resides in the cytoplasm. It is found in the nucleus. In terms of biological role, is associated with a DNA binding complex that binds to the G box, a well-characterized cis-acting DNA regulatory element found in plant genes. The polypeptide is 14-3-3-like protein GF14-F (GF14F) (Oryza sativa subsp. japonica (Rice)).